A 747-amino-acid polypeptide reads, in one-letter code: uncharacterized protein (747 aa).

The chain crosses the membrane as a helical span at residues 7–27 (FFLKVISVIAPIVIIPTILAN).

The protein resides in the membrane. This is an uncharacterized protein from Ureaplasma parvum serovar 3 (strain ATCC 700970).